We begin with the raw amino-acid sequence, 212 residues long: Imidazole glycerol phosphate synthase subunit HisH (212 aa).

One can recognise a Glutamine amidotransferase type-1 domain in the interval 2–212 (LTAIIDYESG…MIGNFLTWTP (211 aa)). Cys87 (nucleophile) is an active-site residue. Active-site residues include His192 and Glu194.

In terms of assembly, heterodimer of HisH and HisF.

It localises to the cytoplasm. It carries out the reaction 5-[(5-phospho-1-deoxy-D-ribulos-1-ylimino)methylamino]-1-(5-phospho-beta-D-ribosyl)imidazole-4-carboxamide + L-glutamine = D-erythro-1-(imidazol-4-yl)glycerol 3-phosphate + 5-amino-1-(5-phospho-beta-D-ribosyl)imidazole-4-carboxamide + L-glutamate + H(+). The enzyme catalyses L-glutamine + H2O = L-glutamate + NH4(+). It participates in amino-acid biosynthesis; L-histidine biosynthesis; L-histidine from 5-phospho-alpha-D-ribose 1-diphosphate: step 5/9. In terms of biological role, IGPS catalyzes the conversion of PRFAR and glutamine to IGP, AICAR and glutamate. The HisH subunit catalyzes the hydrolysis of glutamine to glutamate and ammonia as part of the synthesis of IGP and AICAR. The resulting ammonia molecule is channeled to the active site of HisF. This Ruegeria pomeroyi (strain ATCC 700808 / DSM 15171 / DSS-3) (Silicibacter pomeroyi) protein is Imidazole glycerol phosphate synthase subunit HisH.